The sequence spans 543 residues: Capsid vertex component 2 (543 aa).

An interaction with major capsid protein/MCP region spans residues 1 to 54 (MWKLEKKYILRQNPSVFLNGTAFWTPHPQNILHIDRNSLRETKKNASLYRTRLL). The segment at 101–120 (SPQLLPSPPKPLSPTTQSQP) is disordered.

This sequence belongs to the herpesviridae CVC2 protein family. As to quaternary structure, heterodimerizes with CVC1. Interacts with major capsid protein/MCP and triplex capsid protein 1/TRX1 at the pentamer vertices. Interacts with the large tegument protein/LTP.

It localises to the virion. It is found in the host nucleus. In terms of biological role, capsid vertex-specific component that plays a role during viral DNA encapsidation, assuring correct genome cleavage and presumably stabilizing capsids that contain full-length viral genomes. Participates in the interaction between the capsid and the tegument through interaction with the large tegument protein/LTP. This chain is Capsid vertex component 2, found in Saimiri sciureus (Common squirrel monkey).